The primary structure comprises 154 residues: Hydroperoxy fatty acid reductase Gpx2 (154 aa).

Residue C34 is part of the active site.

This sequence belongs to the glutathione peroxidase family. As to quaternary structure, monomer.

It carries out the reaction a hydroperoxy polyunsaturated fatty acid + NADPH + H(+) = a hydroxy polyunsaturated fatty acid + NADP(+) + H2O. Mercaptosuccinate, pCMB, and nethylmaleimide act as inhibitors of the catalytic activity. Hydroperoxy fatty acid reductase essential for the removal of lipid hydroperoxides under normal and stress conditions, leading to the protection of membrane integrity. This chain is Hydroperoxy fatty acid reductase Gpx2 (gpx2), found in Synechocystis sp. (strain ATCC 27184 / PCC 6803 / Kazusa).